The primary structure comprises 545 residues: Chaperonin GroEL (545 aa).

ATP is bound by residues 29–32, lysine 50, 86–90, glycine 414, 477–479, and aspartate 493; these read TMGP, DGTTT, and DAA.

It belongs to the chaperonin (HSP60) family. As to quaternary structure, forms a cylinder of 14 subunits composed of two heptameric rings stacked back-to-back. Interacts with the co-chaperonin GroES.

It is found in the cytoplasm. The catalysed reaction is ATP + H2O + a folded polypeptide = ADP + phosphate + an unfolded polypeptide.. Its function is as follows. Together with its co-chaperonin GroES, plays an essential role in assisting protein folding. The GroEL-GroES system forms a nano-cage that allows encapsulation of the non-native substrate proteins and provides a physical environment optimized to promote and accelerate protein folding. This Campylobacter jejuni subsp. jejuni serotype O:6 (strain 81116 / NCTC 11828) protein is Chaperonin GroEL.